A 154-amino-acid chain; its full sequence is MDFPQRVNGWALYAHPCFQETYDALVAEVETLKGKDPENYQRKAATKLLAVVHKVIEEHITVNPSSPAFRHGKSLGSGKNKDWSRVKFGAGRYRLFFRYSEKEKVIILGWMNDENTLRTYGKKTDAYTVFSKMLKRGHPPADWETLTRETEETH.

In terms of assembly, homohexamer; forms a complex with PrlF (SohA) with stoichiometry PrlF(2)-YhaV(4), possibly as a YhaV(2)-PrlF(2)-YhaV(2) complex like the MazFE complex. May dimerize in solution.

Toxic component of a type II toxin-antitoxin (TA) system. Has RNase activity in vitro. Acts as a transcription factor. The YhaV/PrlF complex binds the prlF-yhaV operon, probably negatively regulating its expression. The protein is Toxin YhaV (yhaV) of Escherichia coli O157:H7.